Consider the following 391-residue polypeptide: Ferrochelatase (391 aa).

Fe cation contacts are provided by histidine 196 and glutamate 281.

Belongs to the ferrochelatase family.

Its subcellular location is the cytoplasm. It carries out the reaction heme b + 2 H(+) = protoporphyrin IX + Fe(2+). It functions in the pathway porphyrin-containing compound metabolism; protoheme biosynthesis; protoheme from protoporphyrin-IX: step 1/1. Catalyzes the ferrous insertion into protoporphyrin IX. This is Ferrochelatase from Prochlorococcus marinus (strain MIT 9215).